We begin with the raw amino-acid sequence, 230 residues long: Protein UPS2, mitochondrial (230 aa).

In terms of domain architecture, PRELI/MSF1 spans 1-175; the sequence is MKLFQNSYDF…VLQVFSENWE (175 aa).

Belongs to the slowmo family. Interacts with MDM35.

Its subcellular location is the mitochondrion inner membrane. It localises to the mitochondrion intermembrane space. Required for mitochondrial cristae morphogenesis and MGM1-processing. Controls the stability of mitochondrial phosphatidylethanolamine (PE). With UPS1, controls the level of cardiolipin in mitochondria. Cardiolipin is a unique phospholipid with four fatty acid chains and is present mainly in the mitochondrial inner membrane where it stabilizes the electron transport chain supercomplex between complexes III and IV through direct interaction of their subunits. This is Protein UPS2, mitochondrial (UPS2) from Saccharomyces cerevisiae (strain ATCC 204508 / S288c) (Baker's yeast).